A 188-amino-acid chain; its full sequence is CMT1A duplicated region transcript 15 protein (188 aa).

Expressed in fetal heart, kidney, liver, lung and spleen.

In Homo sapiens (Human), this protein is CMT1A duplicated region transcript 15 protein (CDRT15).